We begin with the raw amino-acid sequence, 239 residues long: LexA repressor (239 aa).

The H-T-H motif DNA-binding region spans 26 to 46 (FDEMKEALDLASKSGIHRLIT). The tract at residues 90–110 (GSLGKTPPPPARPAPVATNDD) is disordered. Catalysis depends on for autocatalytic cleavage activity residues serine 160 and lysine 198.

This sequence belongs to the peptidase S24 family. In terms of assembly, homodimer.

It carries out the reaction Hydrolysis of Ala-|-Gly bond in repressor LexA.. Represses a number of genes involved in the response to DNA damage (SOS response), including recA and lexA. In the presence of single-stranded DNA, RecA interacts with LexA causing an autocatalytic cleavage which disrupts the DNA-binding part of LexA, leading to derepression of the SOS regulon and eventually DNA repair. This chain is LexA repressor, found in Brucella anthropi (strain ATCC 49188 / DSM 6882 / CCUG 24695 / JCM 21032 / LMG 3331 / NBRC 15819 / NCTC 12168 / Alc 37) (Ochrobactrum anthropi).